Reading from the N-terminus, the 309-residue chain is Sulfate adenylyltransferase subunit 2 (309 aa).

Belongs to the PAPS reductase family. CysD subfamily. Heterodimer composed of CysD, the smaller subunit, and CysN.

The catalysed reaction is sulfate + ATP + H(+) = adenosine 5'-phosphosulfate + diphosphate. Its pathway is sulfur metabolism; hydrogen sulfide biosynthesis; sulfite from sulfate: step 1/3. With CysN forms the ATP sulfurylase (ATPS) that catalyzes the adenylation of sulfate producing adenosine 5'-phosphosulfate (APS) and diphosphate, the first enzymatic step in sulfur assimilation pathway. APS synthesis involves the formation of a high-energy phosphoric-sulfuric acid anhydride bond driven by GTP hydrolysis by CysN coupled to ATP hydrolysis by CysD. This chain is Sulfate adenylyltransferase subunit 2, found in Methylorubrum populi (strain ATCC BAA-705 / NCIMB 13946 / BJ001) (Methylobacterium populi).